A 270-amino-acid chain; its full sequence is Interleukin-1 alpha (270 aa).

A propeptide spanning residues 1 to 114 (MAKVPDLFED…HDLEETIQPR (114 aa)) is cleaved from the precursor. The N-linked (GlcNAc...) asparagine glycan is linked to Asn-46. Lys-85 is subject to N6-acetyllysine. The segment at 85-89 (KKRRL) is nuclear localization signal (NLS). At Ser-90 the chain carries Phosphoserine. The N-linked (GlcNAc...) asparagine glycan is linked to Asn-139.

The protein belongs to the IL-1 family. Monomer. Interacts with TMED10; the interaction mediates the translocation from the cytoplasm into the ERGIC (endoplasmic reticulum-Golgi intermediate compartment) and thereby secretion. Interacts with IL1R1. Interacts with S100A13; this interaction is the first step in the export of IL1A, followed by direct translocation of this complex across the plasma membrane. In terms of processing, acetylated within its nuclear localization sequence, which impacts subcellular localization. Post-translationally, proteolytic processed by CAPN1 in a calcium-dependent manner. Cleavage from 31 kDa precursor to 18 kDa biologically active molecules. Phosphorylated. Phosphorylation greatly enhances susceptibility to digestion and promotes the conversion of pre-IL1A alpha to the biologically active IL1A.

The protein localises to the nucleus. It is found in the cytoplasm. The protein resides in the secreted. In terms of biological role, cytokine constitutively present intracellularly in nearly all resting non-hematopoietic cells that plays an important role in inflammation and bridges the innate and adaptive immune systems. After binding to its receptor IL1R1 together with its accessory protein IL1RAP, forms the high affinity interleukin-1 receptor complex. Signaling involves the recruitment of adapter molecules such as MYD88, IRAK1 or IRAK4. In turn, mediates the activation of NF-kappa-B and the three MAPK pathways p38, p42/p44 and JNK pathways. Within the cell, acts as an alarmin and cell death results in its liberation in the extracellular space after disruption of the cell membrane to induce inflammation and alert the host to injury or damage. In addition to its role as a danger signal, which occurs when the cytokine is passively released by cell necrosis, directly senses DNA damage and acts as signal for genotoxic stress without loss of cell integrity. In Rattus norvegicus (Rat), this protein is Interleukin-1 alpha.